A 525-amino-acid chain; its full sequence is Light-independent protochlorophyllide reductase subunit B (525 aa).

Residue aspartate 36 coordinates [4Fe-4S] cluster. Aspartate 274 functions as the Proton donor in the catalytic mechanism. 409–410 (GL) provides a ligand contact to substrate. Positions 433-464 (HGGKAVAREESPVAPADLAPAATSDTPAAPSP) are disordered. Residues 444–464 (PVAPADLAPAATSDTPAAPSP) are compositionally biased toward low complexity.

Belongs to the ChlB/BchB/BchZ family. In terms of assembly, protochlorophyllide reductase is composed of three subunits; BchL, BchN and BchB. Forms a heterotetramer of two BchB and two BchN subunits. [4Fe-4S] cluster serves as cofactor.

It carries out the reaction chlorophyllide a + oxidized 2[4Fe-4S]-[ferredoxin] + 2 ADP + 2 phosphate = protochlorophyllide a + reduced 2[4Fe-4S]-[ferredoxin] + 2 ATP + 2 H2O. Its pathway is porphyrin-containing compound metabolism; bacteriochlorophyll biosynthesis (light-independent). Its function is as follows. Component of the dark-operative protochlorophyllide reductase (DPOR) that uses Mg-ATP and reduced ferredoxin to reduce ring D of protochlorophyllide (Pchlide) to form chlorophyllide a (Chlide). This reaction is light-independent. The NB-protein (BchN-BchB) is the catalytic component of the complex. The chain is Light-independent protochlorophyllide reductase subunit B from Rhodobacter capsulatus (strain ATCC BAA-309 / NBRC 16581 / SB1003).